Reading from the N-terminus, the 105-residue chain is Flagellar transcriptional regulator FlhD (105 aa).

The protein belongs to the FlhD family. As to quaternary structure, homodimer; disulfide-linked. Forms a heterohexamer composed of two FlhC and four FlhD subunits. Each FlhC binds a FlhD dimer, forming a heterotrimer, and a hexamer assembles by dimerization of two heterotrimers.

It is found in the cytoplasm. Functions in complex with FlhC as a master transcriptional regulator that regulates transcription of several flagellar and non-flagellar operons by binding to their promoter region. Activates expression of class 2 flagellar genes, including fliA, which is a flagellum-specific sigma factor that turns on the class 3 genes. Also regulates genes whose products function in a variety of physiological pathways. This chain is Flagellar transcriptional regulator FlhD, found in Cupriavidus pinatubonensis (strain JMP 134 / LMG 1197) (Cupriavidus necator (strain JMP 134)).